Here is a 217-residue protein sequence, read N- to C-terminus: Secreted RxLR effector protein 147 (217 aa).

The N-terminal stretch at methionine 1 to alanine 23 is a signal peptide. The interval glutamate 22–histidine 52 is disordered. A RxLR-dEER motif is present at residues arginine 46 to arginine 67.

It belongs to the RxLR effector family.

The protein localises to the secreted. It localises to the host nucleus. Its subcellular location is the host cytoplasm. Secreted effector that completely suppresses the host cell death induced by cell death-inducing proteins. This Plasmopara viticola (Downy mildew of grapevine) protein is Secreted RxLR effector protein 147.